Here is a 113-residue protein sequence, read N- to C-terminus: Dynein light chain Tctex-type 1 (113 aa).

Position 1 is an N-acetylmethionine (methionine 1). The tract at residues 41-113 (QWTTNVVEQT…CIVSAFGLSI (73 aa)) is interaction with GNB1.

It belongs to the dynein light chain Tctex-type family. Homodimer. The cytoplasmic dynein 1 complex consists of two catalytic heavy chains (HCs) and a number of non-catalytic subunits presented by intermediate chains (ICs), light intermediate chains (LICs) and light chains (LCs); the composition seems to vary in respect to the IC, LIC and LC composition. The heavy chain homodimer serves as a scaffold for the probable homodimeric assembly of the respective non-catalytic subunits. The ICs and LICs bind directly to the HC dimer and dynein LCs assemble on the IC dimer. DYNLT1 and DYNLT3 compete for association with dynein IC (DYNC1I1 or DYNC1I2). Self-associates. Interacts with RHO. Interacts with DYNC1I1 and DYNC1I2. Interacts with DOC2A, DOC2B and SCN10A. Interacts with PVR. Interacts with SVIL isoform 2. Interacts with GNB1; the interaction occurs in presence of guanine nucleotide-binding protein G(T) subunit gamma; the interaction diminishes the association of DYNLT1 with dynein IC (DYNC1I1 or DYNC1I2). Interacts with GNB2, GNB3 and GNB5; the interactions occur in presence of guanine nucleotide-binding protein G(T) subunit gamma. Interacts with ACVR2B and ARHGEF2. Interacts with DNAI4. Interacts with CFAP61. Post-translationally, phosphorylated by BMPR2. The phosphorylation status is proposed to regulate the association with the cytoplasmic dynein complex and may have role in cytoplasmic dynein cargo release.

The protein resides in the golgi apparatus. The protein localises to the cytoplasm. Its subcellular location is the cytoskeleton. It localises to the spindle. Acts as one of several non-catalytic accessory components of the cytoplasmic dynein 1 complex that are thought to be involved in linking dynein to cargos and to adapter proteins that regulate dynein function. Cytoplasmic dynein 1 acts as a motor for the intracellular retrograde motility of vesicles and organelles along microtubules. Binds to transport cargos and is involved in apical cargo transport such as rhodopsin-bearing vesicles in polarized epithelia. Is involved in intracellular targeting of D-type retrovirus gag polyproteins to the cytoplasmic assembly site. May also be a accessory component of axonemal dynein. Functionally, plays a role in neuronal morphogenesis; the function is independent of cytoplasmic dynein and seems to be coupled to regulation of the actin cytoskeleton by enhancing Rac1 activity. Required for neurite outgrowth. The function in neurogenesis may be regulated by association with a G-protein beta-gamma dimer. May function as a receptor-independent activator of heterotrimeric G-protein signaling; the activation appears to be independent of a nucleotide exchange. Plays a role in regulating neurogenesis; inhibits the genesis of neurons from precursor cells during cortical development presumably by antagonizing ARHGEF2. Unrelated to the role in retrograde microtubule-associated movement may play a role in the dimerization of cytoplasmic proteins/domains such as for ACVR2B. Binds to the cytoplasmic domain of ACVR2B and, in vitro, inhibits ACVR2B signaling. Involved in the regulation of mitotic spindle orientation. The polypeptide is Dynein light chain Tctex-type 1 (Dynlt1) (Rattus norvegicus (Rat)).